The following is a 384-amino-acid chain: 5-cytosine rRNA methyltransferase NSUN4 (384 aa).

Residues 1–25 (MAALTLRGVRELLKRVDLATVPRRH) constitute a mitochondrion transit peptide. Positions 185, 186, 187, and 204 each coordinate S-adenosyl-L-methionine. Ser206 bears the Phosphoserine mark. 4 residues coordinate S-adenosyl-L-methionine: Arg209, Asp237, Gly238, and Asp255. The active-site Nucleophile is Cys310.

It belongs to the class I-like SAM-binding methyltransferase superfamily. RsmB/NOP family. In terms of assembly, heterodimer with MTERFD2/MTERF4; this interaction seems to be required for NSUN4 recruitment to the mitochondrial large ribosomal subunit.

It is found in the mitochondrion. It carries out the reaction a cytidine in rRNA + S-adenosyl-L-methionine = a 5-methylcytidine in rRNA + S-adenosyl-L-homocysteine + H(+). It catalyses the reaction a cytidine in mRNA + S-adenosyl-L-methionine = a 5-methylcytidine in mRNA + S-adenosyl-L-homocysteine + H(+). Mitochondrial RNA cytosine C(5)-methyltransferase that methylates cytosine to 5-methylcytosine (m5C) in various RNAs, such as rRNAs, mRNAs and some long non-coding RNAs (lncRNAs). Involved in mitochondrial ribosome small subunit (SSU) maturation by catalyzing methylation of mitochondrial 12S rRNA; the function is independent of MTERFD2/MTERF4 and assembled mitochondrial ribosome large subunit (LSU). Targeted to LSU by MTERFD2/MTERF4 and probably is involved in a final step in ribosome biogenesis to ensure that SSU and LSU are assembled. In vitro can methylate 16S rRNA of the LSU; the methylation is enhanced by MTERFD/MTERF4. Also acts as a regulator of innate immunity by marking double-stranded mitochondrial RNAs(mt-dsRNAs) generated in response to stress: catalyzes m5C modification on mitochondrial RNAs, such as a mRNAs and lncRNAs, with a preference for the termini of light-strand lncRNAs, promoting their degradation and cytosolic release. Modified light-strand lncRNAs are then recognized by C1QBP reader and recruited to the mitochondrial degradosome complex, which promotes their degradation. In Homo sapiens (Human), this protein is 5-cytosine rRNA methyltransferase NSUN4.